A 318-amino-acid polypeptide reads, in one-letter code: Decaprenyl-phosphate phosphoribosyltransferase (318 aa).

2 consecutive transmembrane segments (helical) span residues 33-53 and 59-79; these read WIKNLLVLAAPLAAVGSGIEY and AAKVSVAFVVFCLAASSIYLI. Lys-35 and Tyr-77 together coordinate 5-phospho-alpha-D-ribose 1-diphosphate. The Mg(2+) site is built by Asn-80 and Asp-84. Lys-94 lines the 5-phospho-alpha-D-ribose 1-diphosphate pocket. Helical transmembrane passes span 99–119 and 121–141; these read IAAGVVPEWMAYSLAGLLAVA and LVISWWLTANLAIVMAVYIAV. 5-phospho-alpha-D-ribose 1-diphosphate contacts are provided by Lys-150 and Arg-167. Helical transmembrane passes span 153 to 173 and 177 to 197; these read AVLDICIVSSGFLIRAIAGGV and IPLSQWFLLVMAFGSLFMAAG. Lys-198 is a trans,octa-cis-decaprenyl phosphate binding site. 3 helical membrane passes run 225–245, 262–282, and 298–318; these read LRFVWTLSATAMVVCYGLWAF, SWYAVTMIPFTIAILRYAVDI, and RVLQILFLAWIGTIGAAIYFS.

It belongs to the UbiA prenyltransferase family. DPPR synthase subfamily. The cofactor is Mg(2+).

It localises to the cell inner membrane. The enzyme catalyses trans,octa-cis-decaprenyl phosphate + 5-phospho-alpha-D-ribose 1-diphosphate + H(+) = trans,octa-cis-decaprenylphospho-beta-D-ribofuranose 5-phosphate + diphosphate. Its pathway is cell wall biogenesis; cell wall polysaccharide biosynthesis. Involved in the biosynthesis of decaprenylphosphoryl arabinose (DPA) a precursor for arabinan synthesis in mycobacterial cell wall biosynthesis. Catalyzes the transfer of a 5-phosphoribosyl residue from phosphoribose diphosphate (PRPP) to decaprenyl phosphate (DP) to form decaprenylphosphoryl-5-phosphoribose (DPPR). This chain is Decaprenyl-phosphate phosphoribosyltransferase, found in Mycolicibacterium smegmatis (strain ATCC 700084 / mc(2)155) (Mycobacterium smegmatis).